The chain runs to 109 residues: Nucleoid-associated protein Ssed_2851 (109 aa).

This sequence belongs to the YbaB/EbfC family. In terms of assembly, homodimer.

Its subcellular location is the cytoplasm. The protein resides in the nucleoid. In terms of biological role, binds to DNA and alters its conformation. May be involved in regulation of gene expression, nucleoid organization and DNA protection. The polypeptide is Nucleoid-associated protein Ssed_2851 (Shewanella sediminis (strain HAW-EB3)).